The primary structure comprises 324 residues: bZIP transcription factor 46 (324 aa).

The interval Leu106 to Gln127 is disordered. The span at Ala115–Ala124 shows a compositional bias: low complexity. The bZIP domain occupies Val242–Lys287. The segment at Arg244 to Lys263 is basic motif. A leucine-zipper region spans residues Leu270–Leu284.

In terms of assembly, interacts with MODD. Interacts with SAPK2, SAPK6 and SAPK9. Phosphorylated on serine and threonine residues by SAPK2, SAPK6 and SAPK9. Phosphorylation is required for full transactivation activity. Expressed in roots, shoots, leaves, flag leaves, stems, flowers and panicles. Widely expressed.

It localises to the nucleus. Its function is as follows. Transcription factor involved in abscisic acid (ABA) signaling pathway. Transcription factor activity is fully activated by ABA. Acts as a positive regulator of the expression of abiotic stress-responsive genes through an ABA-dependent signaling pathway. Acts as a positive regulator of ABA signaling and drought stress tolerance. Plays an important role in ABA and auxin responses. Involved in ABA signaling and stress responses by directly binding to the ABA-responsive element (ABRE)-containing genes, especially WRKY family genes. Modulates response to auxin. Suppresses auxin signaling by targeting ABRE-containing genes related to auxin metabolism or signaling. The protein is bZIP transcription factor 46 of Oryza sativa subsp. japonica (Rice).